We begin with the raw amino-acid sequence, 485 residues long: Glutamyl-tRNA(Gln) amidotransferase subunit A (485 aa).

Active-site charge relay system residues include Lys76 and Ser151. Catalysis depends on Ser175, which acts as the Acyl-ester intermediate.

This sequence belongs to the amidase family. GatA subfamily. In terms of assembly, heterotrimer of A, B and C subunits.

The enzyme catalyses L-glutamyl-tRNA(Gln) + L-glutamine + ATP + H2O = L-glutaminyl-tRNA(Gln) + L-glutamate + ADP + phosphate + H(+). Functionally, allows the formation of correctly charged Gln-tRNA(Gln) through the transamidation of misacylated Glu-tRNA(Gln) in organisms which lack glutaminyl-tRNA synthetase. The reaction takes place in the presence of glutamine and ATP through an activated gamma-phospho-Glu-tRNA(Gln). The polypeptide is Glutamyl-tRNA(Gln) amidotransferase subunit A (Chlorobium luteolum (strain DSM 273 / BCRC 81028 / 2530) (Pelodictyon luteolum)).